We begin with the raw amino-acid sequence, 967 residues long: MSTKFANDSNTNARPEKPFIARMIHAFAVPIILGWLAVCVVVTVFVPSLEAVGQERSVSLSPKDAPSFEAMGRIGMVFKEGDSDSFAMVIIEGNQPLGDAAHKYYDGLVAQLRADKKHVQSVQDLWGDPLTAAGVQSNDGKAAYVQLSLAGNQGTPLANESVEAVRSIVESTPAPPGIKAYVTGPSALAADMHHSGDRSMARITMVTVAVIFIMLLLVYRSIITVVLLLITVGVELTAARGVVAVLGHSGAIGLTTFAVSLLTSLAIAAGTDYGIFIIGRYQEARQAGEDKEAAYYTMYRGTAHVILGSGLTIAGATFCLSFARMPYFQTLGIPCAVGMLVAVAVALTLGPAVLHVGSRFGLFDPKRLLKVRGWRRVGTVVVRWPLPVLVATCAIALVGLLALPGYKTSYNDRDYLPDFIPANQGYAAADRHFSQARMKPEILMIESDHDMRNPADFLVLDKLAKGIFRVPGISRVQAITRPEGTTMDHTSIPFQISMQNAGQLQTIKYQRDRANDMLKQADEMATTIAVLTRMHSLMAEMASTTHRMVGDTEEMKEITEELRDHVADFDDFWRPIRSYFYWEKHCYGIPICWSFRSIFDALDGIDKLSEQIGVLLGDLREMDRLMPQMVAQIPPQIEAMENMRTMILTMHSTMTGIFDQMLEMSDNATAMGKAFDAAKNDDSFYLPPEVFKNKDFQRAMKSFLSSDGHAARFIILHRGDPQSPEGIKSIDAIRTAAEESLKGTPLEDAKIYLAGTAAVFHDISEGAQWDLLIAAISSLCLIFIIMLIITRAFIAAAVIVGTVALSLGASFGLSVLLWQHILAIHLHWLVLAMSVIVLLAVGSDYNLLLVSRFKQEIGAGLKTGIIRSMGGTGKVVTNAGLVFAVTMASMAVSDLRVIGQVGTTIGLGLLFDTLIVRSFMTPSIAALLGRWFWWPLRVRSRPARTPTVPSETQPAGRPLAMSSDRLG.

Transmembrane regions (helical) follow at residues 26–46 (AFAV…TVFV), 210–230 (VIFI…LLLI), 242–262 (VVAV…VSLL), 303–323 (AHVI…LSFA), 333–353 (IPCA…GPAV), 384–404 (WPLP…LALP), 769–789 (WDLL…MLII), 793–813 (FIAA…SFGL), 821–841 (ILAI…LLAV), 875–895 (VVTN…VSDL), and 913–934 (TLIV…WFWW). The disordered stretch occupies residues 943 to 967 (ARTPTVPSETQPAGRPLAMSSDRLG).

It belongs to the resistance-nodulation-cell division (RND) (TC 2.A.6) family. MmpL subfamily. Interacts with MmpS4.

The protein localises to the cell inner membrane. In terms of biological role, part of an export system, which is required for biosynthesis and secretion of siderophores. The protein is Siderophore exporter MmpL4 (mmpL4) of Mycobacterium tuberculosis (strain CDC 1551 / Oshkosh).